Reading from the N-terminus, the 265-residue chain is Chlorophyll a-b binding protein 1A, chloroplastic (265 aa).

Residues 1–34 (MAAAAMALSSPSFAGQAVKLSPSASENSGNGRIT) constitute a chloroplast transit peptide. A helical transmembrane segment spans residues 151–171 (LVHAQSILAIWACQVVLMGAV). Chlorophyll b-binding residues include V152, S156, Q164, E172, R175, and L181. K212, E213, N216, R218, Q230, H245, and A254 together coordinate chlorophyll a. A helical membrane pass occupies residues 219-239 (LAMFSMFGFFVQAIVTGKGPL). F261 contacts chlorophyll b.

Belongs to the light-harvesting chlorophyll a/b-binding (LHC) protein family. In terms of assembly, the LHC complex consists of chlorophyll a-b binding proteins. The cofactor is Binds at least 14 chlorophylls (8 Chl-a and 6 Chl-b) and carotenoids such as lutein and neoxanthin.. Post-translationally, photoregulated by reversible phosphorylation of its threonine residues.

It is found in the plastid. The protein localises to the chloroplast thylakoid membrane. Its function is as follows. The light-harvesting complex (LHC) functions as a light receptor, it captures and delivers excitation energy to photosystems with which it is closely associated. The polypeptide is Chlorophyll a-b binding protein 1A, chloroplastic (CAB1A) (Solanum lycopersicum (Tomato)).